Consider the following 82-residue polypeptide: Cytochrome b559 subunit alpha (82 aa).

Residues 22-36 (IIHAVALPAIFVAGF) traverse the membrane as a helical segment. Position 24 (His-24) interacts with heme.

Belongs to the PsbE/PsbF family. Heterodimer of an alpha subunit and a beta subunit. PSII is composed of 1 copy each of membrane proteins PsbA, PsbB, PsbC, PsbD, PsbE, PsbF, PsbH, PsbI, PsbJ, PsbK, PsbL, PsbM, PsbT, PsbX, PsbY, Psb30/Ycf12, peripheral proteins PsbO, CyanoQ (PsbQ), PsbU, PsbV and a large number of cofactors. It forms dimeric complexes. The cofactor is heme b.

The protein localises to the cellular thylakoid membrane. In terms of biological role, this b-type cytochrome is tightly associated with the reaction center of photosystem II (PSII). PSII is a light-driven water:plastoquinone oxidoreductase that uses light energy to abstract electrons from H(2)O, generating O(2) and a proton gradient subsequently used for ATP formation. It consists of a core antenna complex that captures photons, and an electron transfer chain that converts photonic excitation into a charge separation. This is Cytochrome b559 subunit alpha from Prochlorococcus marinus (strain NATL1A).